The sequence spans 157 residues: Small ribosomal subunit protein uS9 (157 aa).

It belongs to the universal ribosomal protein uS9 family.

The polypeptide is Small ribosomal subunit protein uS9 (Caulobacter vibrioides (strain ATCC 19089 / CIP 103742 / CB 15) (Caulobacter crescentus)).